Consider the following 154-residue polypeptide: Snaclec dabocetin subunit alpha (154 aa).

The N-terminal stretch at 1 to 23 (MGRFISVSFGLLVVFLSLSGTGA) is a signal peptide. Disulfide bonds link Cys-25/Cys-36, Cys-53/Cys-148, and Cys-123/Cys-140. The C-type lectin domain occupies 32 to 149 (HEGHCYKVFK…CGDKNPFICK (118 aa)).

This sequence belongs to the snaclec family. In terms of assembly, heterodimer of subunits alpha and beta; disulfide-linked. In terms of tissue distribution, expressed by the venom gland.

It localises to the secreted. In terms of biological role, inhibits ristocetin-induced platelet aggregation via binding to platelet glycoprotein Ibalpha (GP1BA). This chain is Snaclec dabocetin subunit alpha, found in Daboia siamensis (Eastern Russel's viper).